A 345-amino-acid polypeptide reads, in one-letter code: Myb/SANT-like DNA-binding domain-containing protein 4 (345 aa).

Residues 4-77 enclose the Myb-like domain; sequence LKRKRKSNFS…EVKRRYLDWR (74 aa). Lys9 participates in a covalent cross-link: Glycyl lysine isopeptide (Lys-Gly) (interchain with G-Cter in SUMO2). Ser106 is subject to Phosphoserine. Residues Lys114 and Lys142 each participate in a glycyl lysine isopeptide (Lys-Gly) (interchain with G-Cter in SUMO2) cross-link. Positions 141 to 160 are disordered; the sequence is VKVEEEERDPQSPEFEIEEE. Thr188 is subject to Phosphothreonine. A coiled-coil region spans residues 203–345; that stretch reads LLVNIEKQKL…LRIQKEGHLQ (143 aa). Glycyl lysine isopeptide (Lys-Gly) (interchain with G-Cter in SUMO2) cross-links involve residues Lys237, Lys254, and Lys273.

This is Myb/SANT-like DNA-binding domain-containing protein 4 (MSANTD4) from Bos taurus (Bovine).